The chain runs to 387 residues: Putative 8-amino-7-oxononanoate synthase (387 aa).

Arginine 19 is a substrate binding site. 107-108 (GY) serves as a coordination point for pyridoxal 5'-phosphate. Residue histidine 132 coordinates substrate. Pyridoxal 5'-phosphate contacts are provided by residues serine 180, 206 to 209 (DEAH), and 237 to 240 (TFGK). N6-(pyridoxal phosphate)lysine is present on lysine 240. Threonine 354 contacts substrate.

Belongs to the class-II pyridoxal-phosphate-dependent aminotransferase family. BioF subfamily. In terms of assembly, homodimer. Pyridoxal 5'-phosphate serves as cofactor.

It carries out the reaction 6-carboxyhexanoyl-[ACP] + L-alanine + H(+) = (8S)-8-amino-7-oxononanoate + holo-[ACP] + CO2. The protein operates within cofactor biosynthesis; biotin biosynthesis. Functionally, catalyzes the decarboxylative condensation of pimeloyl-[acyl-carrier protein] and L-alanine to produce 8-amino-7-oxononanoate (AON), [acyl-carrier protein], and carbon dioxide. The chain is Putative 8-amino-7-oxononanoate synthase (bioF) from Pasteurella multocida (strain Pm70).